A 245-amino-acid polypeptide reads, in one-letter code: Dehydrogenase/reductase SDR family member 6 (245 aa).

Residues 16–18 (QGI), D37, and D58 contribute to the NAD(+) site. Position 144 (R144) interacts with substrate. The active-site Proton acceptor is Y147. Residues K151 and 180–184 (VDTPS) contribute to the NAD(+) site. Positions 188 and 205 each coordinate substrate.

The protein belongs to the short-chain dehydrogenases/reductases (SDR) family. As to quaternary structure, homotetramer. Detected in liver (at protein level).

Its subcellular location is the cytoplasm. The catalysed reaction is cis-4-hydroxy-L-proline + NAD(+) = 4-oxo-L-proline + NADH + H(+). It carries out the reaction (R)-3-hydroxybutanoate + NAD(+) = acetoacetate + NADH + H(+). The protein operates within amino-acid metabolism. Its pathway is siderophore biosynthesis. NAD(H)-dependent dehydrogenase/reductase with a preference for cyclic substrates. Catalyzes stereoselective conversion of 4-oxo-L-proline to cis-4-hydroxy-L-proline, likely a detoxification mechanism for ketoprolines. Mediates the formation of 2,5-dihydroxybenzoate (2,5-DHBA), a siderophore that chelates free cytoplasmic iron and associates with LCN2, thereby regulating iron transport and homeostasis while protecting cells against free radical-induced oxidative stress. The iron-siderophore complex is imported into mitochondria, providing an iron source for mitochondrial metabolic processes in particular heme synthesis. May act as a 3-hydroxybutyrate dehydrogenase. This is Dehydrogenase/reductase SDR family member 6 from Homo sapiens (Human).